Reading from the N-terminus, the 553-residue chain is Protein TIC 55, chloroplastic (553 aa).

A chloroplast-targeting transit peptide spans 1–60; the sequence is MALALASANSFLLPTKTHFALHVSPPPSKKTLLCTNPSSNFSFNKALSSRRRKQAWCVAA. Residues 61–492 are Stromal-facing; the sequence is AADVKDATLL…GCSSAIKAFQ (432 aa). In terms of domain architecture, Rieske spans 103–208; the sequence is WYPLYLTKNV…VRDSQGVLWV (106 aa). Positions 144, 146, 163, and 166 each coordinate [2Fe-2S] cluster. 2 residues coordinate Fe cation: His257 and His262. A helical membrane pass occupies residues 493-513; sequence IWKNVLSGVVVALAALAILVS. Over 514 to 518 the chain is Chloroplast intermembrane; the sequence is GRQWK. A helical transmembrane segment spans residues 519–539; the sequence is VLLLASASLCSVGVYACSTAI. Residues 540 to 553 lie on the Stromal side of the membrane; the sequence is AMNTTNFIRVHRRL.

Part of the Tic complex. Interacts with TIC62 and TIC110. The cofactor is [2Fe-2S] cluster.

Its subcellular location is the plastid. The protein resides in the chloroplast inner membrane. Involved in protein precursor import into chloroplasts. Part of the redox regulon consisting of TIC32, TIC 55 and TIC62. This Pisum sativum (Garden pea) protein is Protein TIC 55, chloroplastic (TIC55).